Consider the following 331-residue polypeptide: Ferrochelatase (331 aa).

Fe cation contacts are provided by histidine 187 and glutamate 286.

It belongs to the ferrochelatase family.

It is found in the cytoplasm. The catalysed reaction is heme b + 2 H(+) = protoporphyrin IX + Fe(2+). The protein operates within porphyrin-containing compound metabolism; protoheme biosynthesis; protoheme from protoporphyrin-IX: step 1/1. Functionally, catalyzes the ferrous insertion into protoporphyrin IX. The chain is Ferrochelatase from Legionella pneumophila (strain Lens).